The sequence spans 214 residues: LexA repressor (214 aa).

The H-T-H motif DNA-binding region spans 26-46 (VREIGEAVGLSSSSTVHSYLK). Catalysis depends on for autocatalytic cleavage activity residues Ser-138 and Lys-175.

This sequence belongs to the peptidase S24 family. As to quaternary structure, homodimer.

It catalyses the reaction Hydrolysis of Ala-|-Gly bond in repressor LexA.. Functionally, represses a number of genes involved in the response to DNA damage (SOS response), including recA and lexA. In the presence of single-stranded DNA, RecA interacts with LexA causing an autocatalytic cleavage which disrupts the DNA-binding part of LexA, leading to derepression of the SOS regulon and eventually DNA repair. This is LexA repressor from Desulforamulus reducens (strain ATCC BAA-1160 / DSM 100696 / MI-1) (Desulfotomaculum reducens).